A 624-amino-acid polypeptide reads, in one-letter code: Chaperone protein HtpG (624 aa).

The a; substrate-binding stretch occupies residues methionine 1–arginine 336. A b region spans residues glutamate 337–lysine 552. Residues leucine 553–serine 624 are c.

This sequence belongs to the heat shock protein 90 family. Homodimer.

The protein resides in the cytoplasm. Functionally, molecular chaperone. Has ATPase activity. This chain is Chaperone protein HtpG, found in Klebsiella pneumoniae subsp. pneumoniae (strain ATCC 700721 / MGH 78578).